The following is a 316-amino-acid chain: Bifunctional protein FolD (316 aa).

NADP(+)-binding positions include 165–167 (GKS) and Ile-231.

It belongs to the tetrahydrofolate dehydrogenase/cyclohydrolase family. In terms of assembly, homodimer.

It catalyses the reaction (6R)-5,10-methylene-5,6,7,8-tetrahydrofolate + NADP(+) = (6R)-5,10-methenyltetrahydrofolate + NADPH. The enzyme catalyses (6R)-5,10-methenyltetrahydrofolate + H2O = (6R)-10-formyltetrahydrofolate + H(+). Its pathway is one-carbon metabolism; tetrahydrofolate interconversion. Its function is as follows. Catalyzes the oxidation of 5,10-methylenetetrahydrofolate to 5,10-methenyltetrahydrofolate and then the hydrolysis of 5,10-methenyltetrahydrofolate to 10-formyltetrahydrofolate. This chain is Bifunctional protein FolD, found in Sphingobium chlorophenolicum.